We begin with the raw amino-acid sequence, 251 residues long: Phosphate import ATP-binding protein PstB 2 (251 aa).

An ABC transporter domain is found at 5–246 (LTTENLSLFY…PVKQETNDYI (242 aa)). 37–44 (GPSGCGKS) is a binding site for ATP.

The protein belongs to the ABC transporter superfamily. Phosphate importer (TC 3.A.1.7) family. In terms of assembly, the complex is composed of two ATP-binding proteins (PstB), two transmembrane proteins (PstC and PstA) and a solute-binding protein (PstS).

The protein resides in the cell membrane. The catalysed reaction is phosphate(out) + ATP + H2O = ADP + 2 phosphate(in) + H(+). Functionally, part of the ABC transporter complex PstSACB involved in phosphate import. Responsible for energy coupling to the transport system. This chain is Phosphate import ATP-binding protein PstB 2, found in Lactiplantibacillus plantarum (strain ATCC BAA-793 / NCIMB 8826 / WCFS1) (Lactobacillus plantarum).